Reading from the N-terminus, the 589-residue chain is Aspartate--tRNA(Asp/Asn) ligase (589 aa).

E170 contributes to the L-aspartate binding site. Positions 194 to 197 (QLFK) are aspartate. R216 contacts L-aspartate. ATP contacts are provided by residues 216-218 (RDE) and Q225. An L-aspartate-binding site is contributed by H448. E482 lines the ATP pocket. R489 provides a ligand contact to L-aspartate. 534–537 (GWDR) contacts ATP. Residues 563 to 589 (PLTDAPASITAQQRKESGIDTKPKEVE) are disordered. Residues 575 to 589 (QRKESGIDTKPKEVE) show a composition bias toward basic and acidic residues.

It belongs to the class-II aminoacyl-tRNA synthetase family. Type 1 subfamily. In terms of assembly, homodimer.

Its subcellular location is the cytoplasm. It carries out the reaction tRNA(Asx) + L-aspartate + ATP = L-aspartyl-tRNA(Asx) + AMP + diphosphate. Functionally, aspartyl-tRNA synthetase with relaxed tRNA specificity since it is able to aspartylate not only its cognate tRNA(Asp) but also tRNA(Asn). Reaction proceeds in two steps: L-aspartate is first activated by ATP to form Asp-AMP and then transferred to the acceptor end of tRNA(Asp/Asn). This is Aspartate--tRNA(Asp/Asn) ligase from Mycobacterium leprae (strain Br4923).